Reading from the N-terminus, the 62-residue chain is Prokaryotic ubiquitin-like protein Pup (62 aa).

Residues 1 to 36 are disordered; the sequence is MEKSSQIHGSKPGDDNADEPENAAGQSQIRKQGADD. The tract at residues 18-56 is ARC ATPase binding; it reads DEPENAAGQSQIRKQGADDLLDEIDGLLESNAEEFVRSY. Residue Gln-62 is modified to Deamidated glutamine. Gln-62 participates in a covalent cross-link: Isoglutamyl lysine isopeptide (Gln-Lys) (interchain with K-? in acceptor proteins).

The protein belongs to the prokaryotic ubiquitin-like protein family. In terms of assembly, strongly interacts with the proteasome-associated ATPase ARC through a hydrophobic interface; the interacting region of Pup lies in its C-terminal half. There is one Pup binding site per ARC hexamer ring. Post-translationally, is modified by deamidation of its C-terminal glutamine to glutamate by the deamidase Dop, a prerequisite to the subsequent pupylation process.

Its pathway is protein degradation; proteasomal Pup-dependent pathway. Its function is as follows. Protein modifier that is covalently attached to lysine residues of substrate proteins, thereby targeting them for proteasomal degradation. The tagging system is termed pupylation. This Corynebacterium kroppenstedtii (strain DSM 44385 / JCM 11950 / CIP 105744 / CCUG 35717) protein is Prokaryotic ubiquitin-like protein Pup.